We begin with the raw amino-acid sequence, 711 residues long: Ribosomal RNA large subunit methyltransferase K/L (711 aa).

The THUMP domain maps to 43–154 (LAYRITLWTR…NGVITIAMNF (112 aa)).

The protein belongs to the methyltransferase superfamily. RlmKL family.

It is found in the cytoplasm. It catalyses the reaction guanosine(2445) in 23S rRNA + S-adenosyl-L-methionine = N(2)-methylguanosine(2445) in 23S rRNA + S-adenosyl-L-homocysteine + H(+). It carries out the reaction guanosine(2069) in 23S rRNA + S-adenosyl-L-methionine = N(2)-methylguanosine(2069) in 23S rRNA + S-adenosyl-L-homocysteine + H(+). Specifically methylates the guanine in position 2445 (m2G2445) and the guanine in position 2069 (m7G2069) of 23S rRNA. This Shewanella oneidensis (strain ATCC 700550 / JCM 31522 / CIP 106686 / LMG 19005 / NCIMB 14063 / MR-1) protein is Ribosomal RNA large subunit methyltransferase K/L.